Reading from the N-terminus, the 312-residue chain is NAD(P)(+)--arginine ADP-ribosyltransferase 1 (312 aa).

The N-terminal stretch at Met-1 to Ala-20 is a signal peptide. A propeptide spanning residues Ala-21–Gly-31 is cleaved from the precursor. Intrachain disulfides connect Cys-51/Cys-260 and Cys-159/Cys-208. The region spanning Ile-71–Ser-256 is the TR mART core domain. The NAD(+) site is built by Tyr-108, Arg-164, and Gln-183. Arg-164 is an active-site residue. The active site involves Ser-186. Residue Ser-217 participates in NAD(+) binding. The active site involves Glu-224. Residues Gly-267 to Val-312 constitute a propeptide that is removed on maturation.

It belongs to the Arg-specific ADP-ribosyltransferase family.

It localises to the secreted. Its subcellular location is the extracellular space. The catalysed reaction is L-arginyl-[protein] + NAD(+) = N(omega)-(ADP-D-ribosyl)-L-arginyl-[protein] + nicotinamide + H(+). In Gallus gallus (Chicken), this protein is NAD(P)(+)--arginine ADP-ribosyltransferase 1.